The chain runs to 574 residues: 2-succinyl-5-enolpyruvyl-6-hydroxy-3-cyclohexene-1-carboxylate synthase (574 aa).

Belongs to the TPP enzyme family. MenD subfamily. As to quaternary structure, homodimer. Mg(2+) serves as cofactor. The cofactor is Mn(2+). It depends on thiamine diphosphate as a cofactor.

It catalyses the reaction isochorismate + 2-oxoglutarate + H(+) = 5-enolpyruvoyl-6-hydroxy-2-succinyl-cyclohex-3-ene-1-carboxylate + CO2. The protein operates within quinol/quinone metabolism; 1,4-dihydroxy-2-naphthoate biosynthesis; 1,4-dihydroxy-2-naphthoate from chorismate: step 2/7. Its pathway is quinol/quinone metabolism; menaquinone biosynthesis. In terms of biological role, catalyzes the thiamine diphosphate-dependent decarboxylation of 2-oxoglutarate and the subsequent addition of the resulting succinic semialdehyde-thiamine pyrophosphate anion to isochorismate to yield 2-succinyl-5-enolpyruvyl-6-hydroxy-3-cyclohexene-1-carboxylate (SEPHCHC). In Rubrobacter xylanophilus (strain DSM 9941 / JCM 11954 / NBRC 16129 / PRD-1), this protein is 2-succinyl-5-enolpyruvyl-6-hydroxy-3-cyclohexene-1-carboxylate synthase.